We begin with the raw amino-acid sequence, 238 residues long: Large ribosomal subunit protein uL1 (238 aa).

It belongs to the universal ribosomal protein uL1 family. Part of the 50S ribosomal subunit.

Its function is as follows. Binds directly to 23S rRNA. The L1 stalk is quite mobile in the ribosome, and is involved in E site tRNA release. In terms of biological role, protein L1 is also a translational repressor protein, it controls the translation of the L11 operon by binding to its mRNA. In Frankia casuarinae (strain DSM 45818 / CECT 9043 / HFP020203 / CcI3), this protein is Large ribosomal subunit protein uL1.